The primary structure comprises 772 residues: Ion-translocating oxidoreductase complex subunit C (772 aa).

2 4Fe-4S ferredoxin-type domains span residues 369-397 (GEPQ…QQLY) and 407-436 (KATT…VQYF). The [4Fe-4S] cluster site is built by Cys-377, Cys-380, Cys-383, Cys-387, Cys-416, Cys-419, Cys-422, and Cys-426. Residues 599 to 748 (KARKLEQQQA…EPEEQVDPRK (150 aa)) form a disordered region.

Belongs to the 4Fe4S bacterial-type ferredoxin family. RnfC subfamily. As to quaternary structure, the complex is composed of six subunits: RsxA, RsxB, RsxC, RsxD, RsxE and RsxG. Requires [4Fe-4S] cluster as cofactor.

The protein resides in the cell inner membrane. Its function is as follows. Part of a membrane-bound complex that couples electron transfer with translocation of ions across the membrane. Required to maintain the reduced state of SoxR. The protein is Ion-translocating oxidoreductase complex subunit C of Shigella dysenteriae serotype 1 (strain Sd197).